We begin with the raw amino-acid sequence, 600 residues long: NADH-quinone oxidoreductase subunit C/D (600 aa).

The tract at residues 1–190 is NADH dehydrogenase I subunit C; that stretch reads MVNNMTDLTA…SPFELTKAKQ (190 aa). Positions 214–600 are NADH dehydrogenase I subunit D; the sequence is DFMFLNLGPN…IDFVMSDVDR (387 aa).

In the N-terminal section; belongs to the complex I 30 kDa subunit family. It in the C-terminal section; belongs to the complex I 49 kDa subunit family. As to quaternary structure, NDH-1 is composed of 13 different subunits. Subunits NuoB, CD, E, F, and G constitute the peripheral sector of the complex.

The protein resides in the cell inner membrane. It catalyses the reaction a quinone + NADH + 5 H(+)(in) = a quinol + NAD(+) + 4 H(+)(out). Functionally, NDH-1 shuttles electrons from NADH, via FMN and iron-sulfur (Fe-S) centers, to quinones in the respiratory chain. The immediate electron acceptor for the enzyme in this species is believed to be ubiquinone. Couples the redox reaction to proton translocation (for every two electrons transferred, four hydrogen ions are translocated across the cytoplasmic membrane), and thus conserves the redox energy in a proton gradient. This Escherichia coli (strain ATCC 8739 / DSM 1576 / NBRC 3972 / NCIMB 8545 / WDCM 00012 / Crooks) protein is NADH-quinone oxidoreductase subunit C/D.